Here is a 459-residue protein sequence, read N- to C-terminus: Palmitoyltransferase PFA4 (459 aa).

The Cytoplasmic segment spans residues 1-9; the sequence is MAARNWSRV. Residues 10–30 traverse the membrane as a helical segment; it reads WVGGTVILISFIAFSSQIFVI. Over 31-37 the chain is Lumenal; sequence WPWYGRE. The helical transmembrane segment at 38 to 58 threads the bilayer; it reads ISLDLLKLLVPLNLAAFMIFW. At 59-138 the chain is on the cytoplasmic side; the sequence is NYRLCVITSP…GNCVGFYNQG (80 aa). The region spanning 95 to 145 is the DHHC domain; it reads RYCKNCEHYKPPRAHHCRQCKTCWLKLDHHCPWIGNCVGFYNQGHFIRFLL. Cys125 (S-palmitoyl cysteine intermediate) is an active-site residue. Residues 139-159 form a helical membrane-spanning segment; the sequence is HFIRFLLWVDIGTTFHLIIMV. Residues 160–177 lie on the Lumenal side of the membrane; the sequence is RRVLYIAEYYHQEPTLAD. A helical membrane pass occupies residues 178–198; the sequence is VLFLVFNFATCVPVWLCVGMF. Over 199 to 459 the chain is Cytoplasmic; the sequence is SIYHVYLACG…DTEEESGYAH (261 aa). Residues 278-379 are disordered; the sequence is HTTQYFWPPQ…DYDHYDEGPM (102 aa). Over residues 286–299 the composition is skewed to pro residues; sequence PQDPSRLPNPPPIP. Residues 310-322 show a composition bias toward polar residues; the sequence is NGFNPNLQPTNSL. Basic and acidic residues predominate over residues 331–356; it reads HIDEDEHSHERDQYRHYSSGEERDND.

It belongs to the DHHC palmitoyltransferase family. PFA4 subfamily.

Its subcellular location is the endoplasmic reticulum membrane. The enzyme catalyses L-cysteinyl-[protein] + hexadecanoyl-CoA = S-hexadecanoyl-L-cysteinyl-[protein] + CoA. Its function is as follows. Mediates the reversible addition of palmitate to target proteins, thereby regulating their membrane association and biological function. This chain is Palmitoyltransferase PFA4, found in Cryptococcus neoformans var. neoformans serotype D (strain B-3501A) (Filobasidiella neoformans).